Here is a 150-residue protein sequence, read N- to C-terminus: uncharacterized protein (150 aa).

This is an uncharacterized protein from Methanocaldococcus jannaschii (strain ATCC 43067 / DSM 2661 / JAL-1 / JCM 10045 / NBRC 100440) (Methanococcus jannaschii).